Here is a 249-residue protein sequence, read N- to C-terminus: Ubiquinone/menaquinone biosynthesis C-methyltransferase UbiE (249 aa).

S-adenosyl-L-methionine is bound by residues Thr72, Asp93, and 121-122 (DA).

It belongs to the class I-like SAM-binding methyltransferase superfamily. MenG/UbiE family.

The enzyme catalyses a 2-demethylmenaquinol + S-adenosyl-L-methionine = a menaquinol + S-adenosyl-L-homocysteine + H(+). It carries out the reaction a 2-methoxy-6-(all-trans-polyprenyl)benzene-1,4-diol + S-adenosyl-L-methionine = a 5-methoxy-2-methyl-3-(all-trans-polyprenyl)benzene-1,4-diol + S-adenosyl-L-homocysteine + H(+). It functions in the pathway quinol/quinone metabolism; menaquinone biosynthesis; menaquinol from 1,4-dihydroxy-2-naphthoate: step 2/2. The protein operates within cofactor biosynthesis; ubiquinone biosynthesis. Methyltransferase required for the conversion of demethylmenaquinol (DMKH2) to menaquinol (MKH2) and the conversion of 2-polyprenyl-6-methoxy-1,4-benzoquinol (DDMQH2) to 2-polyprenyl-3-methyl-6-methoxy-1,4-benzoquinol (DMQH2). In Saccharophagus degradans (strain 2-40 / ATCC 43961 / DSM 17024), this protein is Ubiquinone/menaquinone biosynthesis C-methyltransferase UbiE.